The primary structure comprises 499 residues: Leukocyte immunoglobulin-like receptor subfamily A member 4 (499 aa).

The first 23 residues, 1-23 (MTLILTSLLFFGLSLGPRTRVQA), serve as a signal peptide directing secretion. 4 consecutive Ig-like C2-type domains span residues 24-118 (ENLL…LVVT), 123-213 (PTLS…SDPL), 224-313 (PSLL…DPLD), and 324-413 (PSLS…SEPL). The Extracellular segment spans residues 24-446 (ENLLKPILWA…PHLQDYTVEN (423 aa)). A disulfide bridge connects residues C49 and C98. N-linked (GlcNAc...) asparagine glycosylation occurs at N138. The cysteines at positions 143 and 195 are disulfide-linked. N239, N279, and N300 each carry an N-linked (GlcNAc...) asparagine glycan. C244 and C295 are joined by a disulfide. A disulfide bridge links C344 with C395. Y404 bears the 3'-nitrotyrosine mark. A helical membrane pass occupies residues 447–467 (LIRMGVAGLVLLFLGILLFEA). Residues 468–499 (QHSQRSPPRCSQEANSRKDNAPFRVVEPWEQI) are Cytoplasmic-facing.

Interacts with FCER1G; this stabilizes the expression of both proteins at the cell membrane. Interacts with BST2; leads to activation of LILRA4-mediated signaling and down-regulation of the innate immune response to viral pathogens. In terms of tissue distribution, detected on plasmacytoid dendritic cells (at protein level). Detected on plasmacytoid dendritic cells, but not on monocytes or B cells.

Its subcellular location is the cell membrane. Its function is as follows. Functions coreceptor to limit the innate immune responses to viral infections; signaling occurs via FCER1G. Down-regulates the production of IFNA1, IFNA2, IFNA4, IFNB1 and TNF by plasmacytoid dendritic cells that have been exposed to influenza virus or cytidine-phosphate-guanosine (CpG) dinucleotides, indicating it functions as a negative regulator of TLR7 and TLR9 signaling cascades. Down-regulates interferon production in response to interaction with BST2 on HIV-1 infected cells. Activates a signaling cascade in complex with FCER1G that results in phosphorylation of Src family and Syk kinases and thereby triggers mobilization of intracellular Ca(2+). Does not interfere with the differentiation of plasmacytoid dendritic cells into antigen-presenting cells. The sequence is that of Leukocyte immunoglobulin-like receptor subfamily A member 4 from Homo sapiens (Human).